We begin with the raw amino-acid sequence, 65 residues long: SPbeta prophage-derived uncharacterized protein YorO (65 aa).

The protein is SPbeta prophage-derived uncharacterized protein YorO (yorO) of Bacillus subtilis (strain 168).